The primary structure comprises 402 residues: Serine/threonine transporter SstT (402 aa).

Helical transmembrane passes span 17 to 37 (IAIG…ITVI), 44 to 64 (FVGG…ANAL), 78 to 98 (IIVL…ISHY), 138 to 158 (ALSQ…GFAM), 179 to 199 (IVRW…FDTI), 212 to 232 (VLIL…NPII), 295 to 315 (MAGA…TLGI), and 336 to 356 (ASGI…LFGI).

Belongs to the dicarboxylate/amino acid:cation symporter (DAACS) (TC 2.A.23) family.

It localises to the cell membrane. It catalyses the reaction L-serine(in) + Na(+)(in) = L-serine(out) + Na(+)(out). It carries out the reaction L-threonine(in) + Na(+)(in) = L-threonine(out) + Na(+)(out). Functionally, involved in the import of serine and threonine into the cell, with the concomitant import of sodium (symport system). The chain is Serine/threonine transporter SstT from Streptococcus thermophilus (strain CNRZ 1066).